Consider the following 552-residue polypeptide: Alpha-galactosidase (552 aa).

Residues tryptophan 65, tyrosine 191, aspartate 220 to aspartate 221, lysine 325 to aspartate 327, cysteine 368, and arginine 383 each bind substrate. Aspartate 327 (nucleophile) is an active-site residue. Catalysis depends on aspartate 387, which acts as the Proton donor/acceptor.

The protein belongs to the glycosyl hydrolase 36 family. As to quaternary structure, homodimer.

The catalysed reaction is Hydrolysis of terminal, non-reducing alpha-D-galactose residues in alpha-D-galactosides, including galactose oligosaccharides, galactomannans and galactolipids.. Inhibited by hydrolysis product alpha-galactopyranose and to a lesser extent by beta-galactopyranose, its mutarotational product. Inhibited by synthetic cyclopropyl carbasugars. Functionally, hydrolyzes the short-chain alpha-galactosaccharides raffinose, melibiose and stachyose. The protein is Alpha-galactosidase of Thermotoga maritima (strain ATCC 43589 / DSM 3109 / JCM 10099 / NBRC 100826 / MSB8).